The sequence spans 194 residues: ATP-dependent Clp protease proteolytic subunit (194 aa).

Serine 97 serves as the catalytic Nucleophile. Residue histidine 122 is part of the active site.

Belongs to the peptidase S14 family. As to quaternary structure, fourteen ClpP subunits assemble into 2 heptameric rings which stack back to back to give a disk-like structure with a central cavity, resembling the structure of eukaryotic proteasomes.

It localises to the cytoplasm. It catalyses the reaction Hydrolysis of proteins to small peptides in the presence of ATP and magnesium. alpha-casein is the usual test substrate. In the absence of ATP, only oligopeptides shorter than five residues are hydrolyzed (such as succinyl-Leu-Tyr-|-NHMec, and Leu-Tyr-Leu-|-Tyr-Trp, in which cleavage of the -Tyr-|-Leu- and -Tyr-|-Trp bonds also occurs).. In terms of biological role, cleaves peptides in various proteins in a process that requires ATP hydrolysis. Has a chymotrypsin-like activity. Plays a major role in the degradation of misfolded proteins. The sequence is that of ATP-dependent Clp protease proteolytic subunit from Lactobacillus delbrueckii subsp. bulgaricus (strain ATCC BAA-365 / Lb-18).